The following is a 171-amino-acid chain: uncharacterized protein (171 aa).

Disordered stretches follow at residues 68-124 (NKNN…ASQQ) and 140-171 (GDEDKGMDSTLKLPERTKRDSDDEDGMFSIKN). The span at 141-160 (DEDKGMDSTLKLPERTKRDS) shows a compositional bias: basic and acidic residues.

Belongs to the asfivirus H171R family.

It localises to the virion. This is an uncharacterized protein from Ornithodoros (relapsing fever ticks).